The chain runs to 187 residues: Serine/arginine-rich splicing factor RSZ21 (187 aa).

The RRM domain occupies 2–73; it reads TRVYVGNLDP…WRVELSHKDK (72 aa). Disordered stretches follow at residues 68–89 and 105–187; these read LSHK…IEDS and RRGR…ANGV. The CCHC-type zinc-finger motif lies at 89–106; sequence SKCYECGELGHFARECRR. Residues 107–122 show a composition bias toward basic residues; the sequence is GRGSVRRRSPSPRRRR. Ser-123, Ser-132, Ser-134, Ser-140, Ser-146, and Ser-159 each carry phosphoserine. Residues 136–155 are compositionally biased toward basic residues; the sequence is RGRRSPPRRRSVTPPRRGRS. The segment covering 165-177 has biased composition (basic and acidic residues); sequence SRRDSPRRRDSPY. The segment covering 178–187 has biased composition (low complexity); sequence GRRSPYANGV. Ser-181 bears the Phosphoserine mark.

It belongs to the splicing factor SR family. RSZ subfamily. In terms of assembly, component of the spliceosome. Interacts with SNRNP35, AFC2, CYP59, RS2Z33 and RNU1. Interacts with MOS14. Extensively phosphorylated on serine residues in the RS domain. Phosphorylated by AFC2. As to expression, expressed in roots, leaves, flowers and siliques.

Its subcellular location is the nucleus speckle. Functionally, probably involved in intron recognition and spliceosome assembly. The sequence is that of Serine/arginine-rich splicing factor RSZ21 (RSZ21) from Arabidopsis thaliana (Mouse-ear cress).